We begin with the raw amino-acid sequence, 283 residues long: Bifunctional protein FolD (283 aa).

Residues 164 to 166 (GRS), serine 189, and isoleucine 230 contribute to the NADP(+) site.

It belongs to the tetrahydrofolate dehydrogenase/cyclohydrolase family. As to quaternary structure, homodimer.

The catalysed reaction is (6R)-5,10-methylene-5,6,7,8-tetrahydrofolate + NADP(+) = (6R)-5,10-methenyltetrahydrofolate + NADPH. The enzyme catalyses (6R)-5,10-methenyltetrahydrofolate + H2O = (6R)-10-formyltetrahydrofolate + H(+). The protein operates within one-carbon metabolism; tetrahydrofolate interconversion. Its function is as follows. Catalyzes the oxidation of 5,10-methylenetetrahydrofolate to 5,10-methenyltetrahydrofolate and then the hydrolysis of 5,10-methenyltetrahydrofolate to 10-formyltetrahydrofolate. This Lacticaseibacillus paracasei (strain ATCC 334 / BCRC 17002 / CCUG 31169 / CIP 107868 / KCTC 3260 / NRRL B-441) (Lactobacillus paracasei) protein is Bifunctional protein FolD.